The sequence spans 603 residues: Elongation factor 4 (603 aa).

The tr-type G domain occupies 2-184 (NHIRNFSIIA…AIVHKMPAPR (183 aa)). GTP-binding positions include 14 to 19 (DHGKST) and 131 to 134 (NKMD).

The protein belongs to the TRAFAC class translation factor GTPase superfamily. Classic translation factor GTPase family. LepA subfamily.

It is found in the cell inner membrane. It carries out the reaction GTP + H2O = GDP + phosphate + H(+). In terms of biological role, required for accurate and efficient protein synthesis under certain stress conditions. May act as a fidelity factor of the translation reaction, by catalyzing a one-codon backward translocation of tRNAs on improperly translocated ribosomes. Back-translocation proceeds from a post-translocation (POST) complex to a pre-translocation (PRE) complex, thus giving elongation factor G a second chance to translocate the tRNAs correctly. Binds to ribosomes in a GTP-dependent manner. The polypeptide is Elongation factor 4 (Variovorax paradoxus (strain S110)).